A 649-amino-acid polypeptide reads, in one-letter code: Acetyl-coenzyme A synthetase (649 aa).

CoA-binding positions include Arg-191–Arg-194, Thr-312, and Asn-336. ATP contacts are provided by residues Gly-388 to Pro-390, Asp-412 to Thr-417, Asp-501, and Arg-516. Ser-524 is a binding site for CoA. Arg-527 contributes to the ATP binding site. Mg(2+)-binding residues include Val-538, His-540, and Val-543. Arg-585 is a binding site for CoA. Residue Lys-610 is modified to N6-acetyllysine.

Belongs to the ATP-dependent AMP-binding enzyme family. The cofactor is Mg(2+). Acetylated. Deacetylation by the SIR2-homolog deacetylase activates the enzyme.

The catalysed reaction is acetate + ATP + CoA = acetyl-CoA + AMP + diphosphate. Functionally, catalyzes the conversion of acetate into acetyl-CoA (AcCoA), an essential intermediate at the junction of anabolic and catabolic pathways. AcsA undergoes a two-step reaction. In the first half reaction, AcsA combines acetate with ATP to form acetyl-adenylate (AcAMP) intermediate. In the second half reaction, it can then transfer the acetyl group from AcAMP to the sulfhydryl group of CoA, forming the product AcCoA. The chain is Acetyl-coenzyme A synthetase from Marinobacter nauticus (strain ATCC 700491 / DSM 11845 / VT8) (Marinobacter aquaeolei).